The following is a 655-amino-acid chain: p-hydroxybenzoic acid efflux pump subunit AaeB (655 aa).

The next 11 helical transmembrane spans lie at 13 to 33, 38 to 58, 69 to 89, 93 to 113, 121 to 141, 152 to 172, 370 to 390, 407 to 427, 431 to 451, 459 to 479, and 482 to 502; these read FAVKLACAIVLALFIGFHFQL, WAVLTAAIVAAGPAFAAGGEP, LRIIGTFIGCIAALIIIISMI, LLMILVCCVWAGFCTWISSLV, WGLSGYTALIIVITIQTEPLL, EIVIGIGCAILADLLFSPRSI, LFWLWTGWTSGNGAMVMIAVV, FIYGTLAALPLGLLYFLVIIP, QSMLLLCLSLAVLGFFIGIEV, MGALASTINIIVLDNPMTFHF, and FLDSALGQIVGCMLAFIVILL.

The protein belongs to the aromatic acid exporter ArAE (TC 2.A.85) family.

It localises to the cell inner membrane. Functionally, forms an efflux pump with AaeA. Could function as a metabolic relief valve, allowing to eliminate certain compounds when they accumulate to high levels in the cell. This is p-hydroxybenzoic acid efflux pump subunit AaeB from Salmonella agona (strain SL483).